The primary structure comprises 3365 residues: Probable serine/threonine-protein kinase roco9 (3365 aa).

Disordered regions lie at residues 1–177, 397–497, 944–985, 1044–1098, and 1261–1301; these read MTSI…KSSK, ESTE…QPPQ, PIKK…GFLS, IHQQ…NNKI, and QNNL…ISKG. Residues 8–27 show a composition bias toward basic and acidic residues; it reads FDKKSKRSNEDTGEKEETKK. Composition is skewed to low complexity over residues 51–84, 100–116, 137–169, and 397–415; these read LQQL…SLNT, STNS…STRS, SQTS…TVKT, and ESTE…TLEP. The Rho-GAP domain occupies 243–437; that stretch reads TPLYSLIKRQ…RLPQQSSDDN (195 aa). Positions 421–434 are enriched in polar residues; it reads PLSTSTQRLPQQSS. Low complexity-rich tracts occupy residues 435 to 445, 457 to 489, 959 to 974, 1044 to 1096, and 1262 to 1301; these read DDNSNNDNNNK, NNDN…QPKQ, SSPL…IPSK, IHQQ…NNNN, and NNLN…ISKG. The Myotubularin phosphatase domain maps to 804-1484; sequence IWDIYSPLIE…DQIILWSSFF (681 aa). LRR repeat units follow at residues 1510–1526, 1527–1549, 1550–1572, 1576–1599, 1600–1622, 1624–1645, 1646–1668, 1670–1691, 1697–1720, 1722–1743, 1744–1770, 1772–1789, 1790–1812, 1814–1835, 1837–1861, and 1863–1887; these read SQKL…LSYF, STLT…IILL, SNLT…LLKL, KLKL…IYTL, STLT…ISKM, QLKC…LSLC, VGLE…FFKL, SLRM…KLDD, MNEI…MFEM, SLIH…LLDN, LVNL…LFKL, VLDL…HAML, PSLK…DFNL, LLSE…IGTK, LSLT…ALLK, and LKSL…DAIL. Over residues 1932-1947 the composition is skewed to basic and acidic residues; that stretch reads SKEREKEKEKEKEKEK. Disordered regions lie at residues 1932–1963, 2190–2389, 2507–2567, and 2674–2704; these read SKER…DKDK, NNNN…NNGS, APST…LQTP, and SNQQ…TSIN. Composition is skewed to low complexity over residues 2190–2205, 2216–2389, 2522–2567, and 2676–2688; these read NNNN…NNNN, SINN…NNGS, NNTS…LQTP, and QQQQ…STQH. The 262-residue stretch at 3008–3269 folds into the Protein kinase domain; that stretch reads ELDPNPIGEG…KKLEEIELIL (262 aa). ATP-binding positions include 3014–3022 and Lys-3035; that span reads IGEGGTATV. Asp-3132 serves as the catalytic Proton acceptor. Low complexity predominate over residues 3311-3333; sequence QQQKQQQLQQQKQSPKQLQQQKP. Residues 3311–3365 form a disordered region; it reads QQQKQQQLQQQKQSPKQLQQQKPLPTPPKQLSNNDSTPTKPLDDSSDSSSEDSNN. Acidic residues predominate over residues 3354–3365; sequence DSSDSSSEDSNN.

It belongs to the protein kinase superfamily. TKL Ser/Thr protein kinase family. ROCO subfamily.

The catalysed reaction is L-seryl-[protein] + ATP = O-phospho-L-seryl-[protein] + ADP + H(+). The enzyme catalyses L-threonyl-[protein] + ATP = O-phospho-L-threonyl-[protein] + ADP + H(+). The sequence is that of Probable serine/threonine-protein kinase roco9 (roco9) from Dictyostelium discoideum (Social amoeba).